The sequence spans 279 residues: Diaminopimelate epimerase (279 aa).

Substrate-binding residues include N13 and N66. The active-site Proton donor is the C75. Residues 76-77 (GN), N164, N197, and 215-216 (ER) contribute to the substrate site. C224 serves as the catalytic Proton acceptor. 225–226 (GT) lines the substrate pocket.

Belongs to the diaminopimelate epimerase family. In terms of assembly, homodimer.

Its subcellular location is the cytoplasm. It carries out the reaction (2S,6S)-2,6-diaminopimelate = meso-2,6-diaminopimelate. Its pathway is amino-acid biosynthesis; L-lysine biosynthesis via DAP pathway; DL-2,6-diaminopimelate from LL-2,6-diaminopimelate: step 1/1. In terms of biological role, catalyzes the stereoinversion of LL-2,6-diaminopimelate (L,L-DAP) to meso-diaminopimelate (meso-DAP), a precursor of L-lysine and an essential component of the bacterial peptidoglycan. In Nostoc punctiforme (strain ATCC 29133 / PCC 73102), this protein is Diaminopimelate epimerase.